The sequence spans 584 residues: Arginine--tRNA ligase (584 aa).

The 'HIGH' region signature appears at 127-137 (PNTNKPLHIGH).

This sequence belongs to the class-I aminoacyl-tRNA synthetase family. In terms of assembly, monomer.

The protein resides in the cytoplasm. The catalysed reaction is tRNA(Arg) + L-arginine + ATP = L-arginyl-tRNA(Arg) + AMP + diphosphate. The protein is Arginine--tRNA ligase of Borrelia hermsii (strain HS1 / DAH).